The sequence spans 171 residues: Large ribosomal subunit protein uL22 (171 aa).

It belongs to the universal ribosomal protein uL22 family.

The chain is Large ribosomal subunit protein uL22 (RPL17) from Zea mays (Maize).